Here is an 809-residue protein sequence, read N- to C-terminus: Zygotic DNA replication licensing factor mcm3 (809 aa).

An MCM domain is found at 297-504; that stretch reads IFEQLSRSLA…QDREISDHVL (208 aa). 347-354 is a binding site for ATP; that stretch reads GDPSVAKS. An Arginine finger motif is present at residues 479–482; sequence SRFD. The interval 664–741 is disordered; sequence KKRRRRDEDS…TDSSAKPGLS (78 aa). Residues 696–705 show a composition bias toward basic and acidic residues; it reads AQEGESHDPY.

This sequence belongs to the MCM family. As to quaternary structure, component of the mcm2-7 complex (RLF-M). The complex forms a toroidal hexameric ring with the proposed subunit order mcm2-mcm6-mcm4-mcm7-mcm3-mcm5. Component of the CMG helicase complex, composed of the mcm2-7 complex, the GINS complex and cdc45.

The protein resides in the nucleus. It localises to the chromosome. The catalysed reaction is ATP + H2O = ADP + phosphate + H(+). Functionally, acts as a component of the MCM2-7 complex (MCM complex) which is the putative replicative helicase essential for 'once per cell cycle' DNA replication initiation and elongation in eukaryotic cells. The active ATPase sites in the MCM2-7 ring are formed through the interaction surfaces of two neighboring subunits such that a critical structure of a conserved arginine finger motif is provided in trans relative to the ATP-binding site of the Walker A box of the adjacent subunit. The six ATPase active sites, however, are likely to contribute differentially to the complex helicase activity. The existence of maternal and zygotic forms of mcm3 and mcm6 suggests that specific forms of mcm2-7 complexes may be used during different stages of development. This is Zygotic DNA replication licensing factor mcm3 (zmcm3) from Xenopus tropicalis (Western clawed frog).